Reading from the N-terminus, the 70-residue chain is Delta-hexatoxin-Mg1b (70 aa).

An N-terminal signal peptide occupies residues 1–26 (MKILEKALLENDSAAEEESRNLRTKR). Cystine bridges form between C27-C41, C34-C46, C40-C57, and C42-C68.

Expressed by the venom gland.

It localises to the secreted. Inhibits tetrodotoxin-sensitive sodium channels (Nav). Intracranial injection into mice causes strong convulsions and death. Intrathorax injection into crickets causes paralysis prolonged for 2 minutes, followed by recovery. This chain is Delta-hexatoxin-Mg1b, found in Macrothele gigas (Japanese funnel web spider).